A 147-amino-acid chain; its full sequence is Large ribosomal subunit protein bL9 (147 aa).

This sequence belongs to the bacterial ribosomal protein bL9 family.

Binds to the 23S rRNA. The protein is Large ribosomal subunit protein bL9 of Campylobacter jejuni subsp. jejuni serotype O:23/36 (strain 81-176).